The primary structure comprises 447 residues: Chaperone protein dnaJ A7B, chloroplastic (447 aa).

The transit peptide at 1-86 directs the protein to the chloroplast; the sequence is MALLQFGGTL…HRRSSRFIVR (86 aa). A J domain is found at 90-154; that stretch reads DFYSTLGVSR…EKRSIYDKYG (65 aa). The CR-type zinc-finger motif lies at 217–298; that stretch reads GVEKEIEITR…CGGDGRVRKT (82 aa). Residues C230, C233, C247, C250, C273, C276, C286, and C289 each contribute to the Zn(2+) site. CXXCXGXG motif repeat units follow at residues 230–237, 247–254, 273–280, and 286–293; these read CNTCDGTG, CKTCGGQG, CNTCGGTG, and CNTCGGDG.

It belongs to the DnaJ family. In terms of assembly, interacts with PCNA. As to expression, expressed in roots, stems, leaves and panicles.

Its subcellular location is the plastid. The protein resides in the chloroplast. Functionally, plays pivotal roles in chloroplast development. Is essential for the regulation of chloroplast development and differentiation. This chain is Chaperone protein dnaJ A7B, chloroplastic, found in Oryza sativa subsp. japonica (Rice).